We begin with the raw amino-acid sequence, 493 residues long: Glutamate--tRNA ligase (493 aa).

The 'HIGH' region motif lies at 10–20 (PSPTGDPHVGT). The 'KMSKS' region motif lies at 251 to 255 (KLSKR). Lys254 is a binding site for ATP.

This sequence belongs to the class-I aminoacyl-tRNA synthetase family. Glutamate--tRNA ligase type 1 subfamily. In terms of assembly, monomer.

The protein resides in the cytoplasm. The catalysed reaction is tRNA(Glu) + L-glutamate + ATP = L-glutamyl-tRNA(Glu) + AMP + diphosphate. Functionally, catalyzes the attachment of glutamate to tRNA(Glu) in a two-step reaction: glutamate is first activated by ATP to form Glu-AMP and then transferred to the acceptor end of tRNA(Glu). In Pseudomonas syringae pv. syringae (strain B728a), this protein is Glutamate--tRNA ligase.